The chain runs to 184 residues: Oligoribonuclease (184 aa).

Residues 7–170 (LIWIDLEMTG…DDIRESVAEL (164 aa)) enclose the Exonuclease domain. Y128 is a catalytic residue.

This sequence belongs to the oligoribonuclease family.

Its subcellular location is the cytoplasm. Its function is as follows. 3'-to-5' exoribonuclease specific for small oligoribonucleotides. In Baumannia cicadellinicola subsp. Homalodisca coagulata, this protein is Oligoribonuclease.